We begin with the raw amino-acid sequence, 199 residues long: MKSSLWVSLAVSLIGLGPAAARNDYPGNYPSSSPPLGPTDWERTPVSVFAKVLNTQPDPDYNLLKELVTYDCTYISLTFDNPTLHGIMPWAGTHTHVGPQAFIDIFTRVGLYWDRGPFSIDHIFGDDGNVTAWGSFTATSRTLGKTVISPWAARARVNSANQIFEFQWMEDTFTTASSFGSDNSTKVFIANPEGGTAHA.

The signal sequence occupies residues 1–21 (MKSSLWVSLAVSLIGLGPAAA). Asn129 and Asn183 each carry an N-linked (GlcNAc...) asparagine glycan.

It belongs to the patF family.

Its subcellular location is the cytoplasm. It localises to the cytosol. It carries out the reaction phyllostine = neopatulin. It functions in the pathway mycotoxin biosynthesis; patulin biosynthesis. Functionally, part of the gene cluster that mediates the biosynthesis of patulin, an acetate-derived tetraketide mycotoxin produced by several fungal species that shows antimicrobial properties against several bacteria. PatF catalyzes the conversion of phyllostine into neopatulin. The pathway begins with the synthesis of 6-methylsalicylic acid by the polyketide synthase (PKS) patK via condensation of acetate and malonate units. The 6-methylsalicylic acid decarboxylase patG then catalyzes the decarboxylation of 6-methylsalicylic acid to yield m-cresol (also known as 3-methylphenol). These first reactions occur in the cytosol. The intermediate m-cresol is then transported into the endoplasmic reticulum where the cytochrome P450 monooxygenase patH converts it to m-hydroxybenzyl alcohol, which is further converted to gentisyl alcohol by the cytochrome P450 monooxygenase patI. The oxidoreductases patJ and patO further convert gentisyl alcohol to isoepoxydon in the vacuole. PatN catalyzes then the transformation of isoepoxydon into phyllostine. The cluster protein patF is responsible for the conversion from phyllostine to neopatulin whereas the alcohol dehydrogenase patD converts neopatulin to E-ascladiol. The steps between isoepoxydon and E-ascladiol occur in the cytosol, and E-ascladiol is probably secreted to the extracellular space by one of the cluster-specific transporters patC or patM. Finally, the secreted patulin synthase patE catalyzes the conversion of E-ascladiol to patulin. The protein is Patulin biosynthesis cluster protein F of Penicillium expansum (Blue mold rot fungus).